The primary structure comprises 452 residues: Exodeoxyribonuclease 7 large subunit (452 aa).

The protein belongs to the XseA family. In terms of assembly, heterooligomer composed of large and small subunits.

It localises to the cytoplasm. The enzyme catalyses Exonucleolytic cleavage in either 5'- to 3'- or 3'- to 5'-direction to yield nucleoside 5'-phosphates.. Functionally, bidirectionally degrades single-stranded DNA into large acid-insoluble oligonucleotides, which are then degraded further into small acid-soluble oligonucleotides. The sequence is that of Exodeoxyribonuclease 7 large subunit from Bacillus cereus (strain B4264).